The primary structure comprises 636 residues: ATP-dependent RNA helicase DBP9 (636 aa).

A disordered region spans residues 1–44 (MKRKLNENNEPVLVSGTNKKKSDTEVSSAVANATPSSEAASSSS). Over residues 31 to 44 (ANATPSSEAASSSS) the composition is skewed to low complexity. Positions 43-71 (SSFADLGLDPRLLQAVAQQSFQKPTLVQS) match the Q motif motif. In terms of domain architecture, Helicase ATP-binding spans 74–253 (IPLALEGRDV…GIFLRDPVLL (180 aa)). ATP is bound at residue 87 to 94 (AKTGSGKT). The short motif at 201–204 (DEAD) is the DEAD box element. A Helicase C-terminal domain is found at 264-489 (EITQYIVKCG…RVIKQQKKLG (226 aa)). Disordered regions lie at residues 352-407 (EMMG…RDKQ) and 600-636 (DRQKKGRFFKKGGARSFKAGGRKPDPLKTFKAKRKTK). The span at 356–378 (DEDRPAPNGDGKEEAEVDKKHEN) shows a compositional bias: basic and acidic residues. 2 stretches are compositionally biased toward basic residues: residues 392-401 (PRPKKKRKMD) and 603-612 (KKGRFFKKGG).

The protein belongs to the DEAD box helicase family. DDX56/DBP9 subfamily.

It is found in the nucleus. The protein localises to the nucleolus. It carries out the reaction ATP + H2O = ADP + phosphate + H(+). Functionally, ATP-binding RNA helicase involved in the biogenesis of 60S ribosomal subunits and is required for the normal formation of 25S and 5.8S rRNAs. This chain is ATP-dependent RNA helicase DBP9 (DBP9), found in Pyricularia oryzae (strain 70-15 / ATCC MYA-4617 / FGSC 8958) (Rice blast fungus).